A 280-amino-acid polypeptide reads, in one-letter code: Mevalonyl-coenzyme A hydratase SIDH (280 aa).

The PTS1-type peroxisomal targeting signal motif lies at 278 to 280; it reads SKL.

It belongs to the enoyl-CoA hydratase/isomerase family.

Its subcellular location is the peroxisome. Its pathway is siderophore biosynthesis. Mevalonyl-coenzyme A hydratase; part of the gene cluster that mediates the biosynthesis of at least 11 siderophores, including beauverichelin A, dimerumic acid (DA), Na-dimethyl coprogen (NADC), eleutherazine B, ferricrocin (FC), fusarinine A, fusarinine C (FsC), metachelin A, mevalonolactone, rhodotorulic acid (RA) and tenellin. This cocktail of siderophores for iron metabolism is essential for virulence, and more specifically for the fungal virulence in penetrating through the host cuticle. Siderophore synthesis is also involved in conidial germination under iron-deficient conditions. For biosynthesis of fusarinine C, the transacylase SIDF transfers anhydromevalonyl to N(5)-hydroxyornithine. The required anhydromevalonyl-CoA moiety is derived from mevalonate by CoA ligation and dehydration catalyzed by SIDI and sidH respectively. SIDH is not essential for siderophore production, probably due to functional redundancy of this protein family, as there are 15 homologs of SIDH in B.bassiana. The chain is Mevalonyl-coenzyme A hydratase SIDH from Beauveria bassiana (strain ARSEF 2860) (White muscardine disease fungus).